The sequence spans 539 residues: MMTSRLPSCFGLRFYAKRAATIRAKPSKLASSVGIGAKRSKKTVKKKGKEVDIFNYGKYVGLKERDPGSETKGKELLDKLSSFDQLKILPEVRNSIKNIIKDETLSKKAKESEDVIPSPIQLIAMKKLSRTLMDPKLQHHAIAAETGSGKTMAYLIPLFDYLKRQETEFPEDWEFMQDKAIIRSVIFLPTHELVDQVYNTVKKTENDLKFHVYKWDSGTKYPEIVEKLKNRIDILITTPAKLLNLFNIRMISRADRLLSEVKFVVLDEADTLLDKSWVEDTHRAIRSLPNTNHLLFCSATIPNDFNDTLERLFPNTIPITTPRLHKLPKSVDFKIIDSSINPFKGSKIKALAQTLYAIANDSSEPGFEKRCIVFTNEKKDVPYIVEKLKVTYGHDCIGLTSNDSVEERLEKIHDFITPPKPITMKKETPKIENEDSVEVEGSNITIGDFSSKTSVKNSNSESSLKVLVSTDLMARGLNFQGVRNLVLYDVPQTSIDLIHRVGRTARMQQRGRVFMITDKKTKSWAKALPKVIKKNMTLK.

A mitochondrion-targeting transit peptide spans 1–24 (MMTSRLPSCFGLRFYAKRAATIRA). Positions 81 to 109 (SSFDQLKILPEVRNSIKNIIKDETLSKKA) match the Q motif motif. Positions 131–319 (TLMDPKLQHH…ERLFPNTIPI (189 aa)) constitute a Helicase ATP-binding domain. Residue 144–151 (AETGSGKT) participates in ATP binding. The DEAD box motif lies at 267–270 (DEAD). One can recognise a Helicase C-terminal domain in the interval 350–539 (ALAQTLYAIA…KVIKKNMTLK (190 aa)).

It belongs to the DEAD box helicase family. MRH4 subfamily.

It localises to the mitochondrion. It catalyses the reaction ATP + H2O = ADP + phosphate + H(+). Its function is as follows. ATP-binding RNA helicase involved in mitochondrial RNA metabolism. Required for maintenance of mitochondrial DNA. The chain is ATP-dependent RNA helicase MRH4, mitochondrial (MRH4) from Vanderwaltozyma polyspora (strain ATCC 22028 / DSM 70294 / BCRC 21397 / CBS 2163 / NBRC 10782 / NRRL Y-8283 / UCD 57-17) (Kluyveromyces polysporus).